The following is a 326-amino-acid chain: RNA-binding motif protein, X-linked 2 (326 aa).

Lys8 participates in a covalent cross-link: Glycyl lysine isopeptide (Lys-Gly) (interchain with G-Cter in SUMO2). The 79-residue stretch at 36 to 114 (AWIFVGGLPY…RTIRVDHVSN (79 aa)) folds into the RRM domain. A disordered region spans residues 117–326 (APQESEDVDD…SYHGSDRRHH (210 aa)). A Phosphothreonine modification is found at Thr140. Ser149 is modified (phosphoserine). Residues 157 to 172 (TKKHKKDKKEKKKRKK) show a composition bias toward basic residues. Polar residues predominate over residues 177 to 190 (GQAQAEQPSCSRSA). Basic and acidic residues-rich tracts occupy residues 191–200 (TVKEKKDERA), 207–219 (KTSE…EHRE), 236–245 (ARAEDPECKA), and 255–273 (KSAS…ERGR). Phosphoserine is present on Ser274. Positions 291–312 (HRSRSRSRSPDKSHRHKKYRHS) are enriched in basic residues. Positions 313-326 (RERDSYHGSDRRHH) are enriched in basic and acidic residues.

Belongs to the IST3 family. In terms of assembly, part of the activated spliceosome B/catalytic step 1 spliceosome, one of the forms of the spliceosome which has a well-formed active site but still cannot catalyze the branching reaction and is composed of at least 52 proteins, the U2, U5 and U6 snRNAs and the pre-mRNA. Component of the minor spliceosome, which splices U12-type introns.

It localises to the nucleus. In terms of biological role, involved in pre-mRNA splicing as component of the activated spliceosome. As a component of the minor spliceosome, involved in the splicing of U12-type introns in pre-mRNAs. The chain is RNA-binding motif protein, X-linked 2 (Rbmx2) from Mus musculus (Mouse).